We begin with the raw amino-acid sequence, 202 residues long: Nucleoside triphosphate pyrophosphatase (202 aa).

Asp79 serves as the catalytic Proton acceptor.

It belongs to the Maf family. A divalent metal cation is required as a cofactor.

Its subcellular location is the cytoplasm. It carries out the reaction a ribonucleoside 5'-triphosphate + H2O = a ribonucleoside 5'-phosphate + diphosphate + H(+). The catalysed reaction is a 2'-deoxyribonucleoside 5'-triphosphate + H2O = a 2'-deoxyribonucleoside 5'-phosphate + diphosphate + H(+). Its function is as follows. Nucleoside triphosphate pyrophosphatase. May have a dual role in cell division arrest and in preventing the incorporation of modified nucleotides into cellular nucleic acids. This chain is Nucleoside triphosphate pyrophosphatase, found in Rhodopseudomonas palustris (strain BisB5).